Reading from the N-terminus, the 831-residue chain is Phenylalanine--tRNA ligase beta subunit (831 aa).

Residues 42–157 (ADISGPIVVG…GFAEPGTKAD (116 aa)) enclose the tRNA-binding domain. Residues 408–483 (VPREPIVVRA…RNEGYENIPA (76 aa)) enclose the B5 domain. The Mg(2+) site is built by Asp-461, Asp-467, Glu-470, and Glu-471. The FDX-ACB domain occupies 737 to 830 (STYPVATQDV…AAERTGAVLR (94 aa)).

This sequence belongs to the phenylalanyl-tRNA synthetase beta subunit family. Type 1 subfamily. As to quaternary structure, tetramer of two alpha and two beta subunits. Mg(2+) is required as a cofactor.

It is found in the cytoplasm. It carries out the reaction tRNA(Phe) + L-phenylalanine + ATP = L-phenylalanyl-tRNA(Phe) + AMP + diphosphate + H(+). The protein is Phenylalanine--tRNA ligase beta subunit of Thermobifida fusca (strain YX).